Consider the following 100-residue polypeptide: NADH-quinone oxidoreductase subunit K (100 aa).

The next 3 helical transmembrane spans lie at 2–22 (VPTT…MIGV), 29–49 (IMVF…LVAF), and 63–83 (FIVM…IVAI).

This sequence belongs to the complex I subunit 4L family. As to quaternary structure, NDH-1 is composed of 15 different subunits. Subunits NuoA, H, J, K, L, M, N constitute the membrane sector of the complex.

It is found in the cell membrane. The catalysed reaction is a quinone + NADH + 5 H(+)(in) = a quinol + NAD(+) + 4 H(+)(out). NDH-1 shuttles electrons from NADH, via FMN and iron-sulfur (Fe-S) centers, to quinones in the respiratory chain. The immediate electron acceptor for the enzyme in this species is believed to be a menaquinone. Couples the redox reaction to proton translocation (for every two electrons transferred, four hydrogen ions are translocated across the cytoplasmic membrane), and thus conserves the redox energy in a proton gradient. The chain is NADH-quinone oxidoreductase subunit K from Deinococcus deserti (strain DSM 17065 / CIP 109153 / LMG 22923 / VCD115).